We begin with the raw amino-acid sequence, 130 residues long: Protein ApaG (130 aa).

Residues 3-127 (RAVTRRIEVT…FSLDSPEGKR (125 aa)) form the ApaG domain.

This chain is Protein ApaG, found in Rhodopseudomonas palustris (strain ATCC BAA-98 / CGA009).